A 147-amino-acid chain; its full sequence is Protein-export protein SecB 2 (147 aa).

Belongs to the SecB family. Homotetramer, a dimer of dimers. One homotetramer interacts with 1 SecA dimer.

Its subcellular location is the cytoplasm. One of the proteins required for the normal export of preproteins out of the cell cytoplasm. It is a molecular chaperone that binds to a subset of precursor proteins, maintaining them in a translocation-competent state. It also specifically binds to its receptor SecA. This is Protein-export protein SecB 2 from Francisella tularensis subsp. novicida (strain U112).